The primary structure comprises 301 residues: Amine sulfotransferase (301 aa).

46–51 (KSGTVW) is a 3'-phosphoadenylyl sulfate binding site. Catalysis depends on histidine 101, which acts as the Proton acceptor. Residues arginine 123, serine 131, tyrosine 186, 220-225 (ATFENM), and 252-254 (RKG) contribute to the 3'-phosphoadenylyl sulfate site.

It belongs to the sulfotransferase 1 family. In terms of tissue distribution, expressed in male liver.

The protein localises to the cytoplasm. It catalyses the reaction a primary amine + 3'-phosphoadenylyl sulfate = a sulfamate + adenosine 3',5'-bisphosphate + 2 H(+). Functionally, sulfotransferase that utilizes 3'-phospho-5'-adenylyl sulfate (PAPS) as sulfonate donor to catalyze the N-sulfonation of amines (PTHP, aniline, 4-chloroaniline, 2-naphthylamine). This is Amine sulfotransferase (SULT3A1) from Oryctolagus cuniculus (Rabbit).